A 491-amino-acid chain; its full sequence is Cytochrome P450 2F2 (491 aa).

Residue cysteine 436 coordinates heme.

It belongs to the cytochrome P450 family. Heme serves as cofactor. As to expression, club cells in lung and liver.

It is found in the endoplasmic reticulum membrane. It localises to the microsome membrane. Involved in the regio- and stereoselective transformation of naphthalene to trans-1R-hydroxy-2R-glutathionyl-1,2-dihydronaphthalene in the presence of glutathione and glutathione S-transferases. It specifically catalyzes the production of a very reactive and potentially toxic intermediate, the 2R,2S arene oxide, that is associated with necrosis of the unciliated bronchiolar epithelial cells or club cells in lung. In Mus musculus (Mouse), this protein is Cytochrome P450 2F2 (Cyp2f2).